A 184-amino-acid chain; its full sequence is MSNTIADHVKAILIALGEDPNREGLRDTPKRYEKALEHLTKGYHEKLPSVVKKAVFQSGMDEMVILKDIELYSLCEHHLLPFIGRCHVAYLPSGKIIGISKLARIVDMFAKRLQVQENLTKQIAEAILTATEAKGVGVIIEAKHLCMMMRGVEKQNSEMTTSVMLGTFRKDDRTRSEFLSLIRK.

The Zn(2+) site is built by cysteine 75, histidine 78, and cysteine 146.

It belongs to the GTP cyclohydrolase I family. As to quaternary structure, homomer.

The enzyme catalyses GTP + H2O = 7,8-dihydroneopterin 3'-triphosphate + formate + H(+). It functions in the pathway cofactor biosynthesis; 7,8-dihydroneopterin triphosphate biosynthesis; 7,8-dihydroneopterin triphosphate from GTP: step 1/1. This is GTP cyclohydrolase 1 from Coxiella burnetii (strain Dugway 5J108-111).